The sequence spans 279 residues: Indole-3-glycerol phosphate synthase (279 aa).

The protein belongs to the TrpC family.

The catalysed reaction is 1-(2-carboxyphenylamino)-1-deoxy-D-ribulose 5-phosphate + H(+) = (1S,2R)-1-C-(indol-3-yl)glycerol 3-phosphate + CO2 + H2O. It functions in the pathway amino-acid biosynthesis; L-tryptophan biosynthesis; L-tryptophan from chorismate: step 4/5. The protein is Indole-3-glycerol phosphate synthase of Ectopseudomonas mendocina (strain ymp) (Pseudomonas mendocina).